Consider the following 94-residue polypeptide: Large ribosomal subunit protein eL36 (94 aa).

The segment covering 1-25 (MKNAYKKVRVRYPVKRPDVKRKQRG) has biased composition (basic residues). The segment at 1 to 30 (MKNAYKKVRVRYPVKRPDVKRKQRGPRAET) is disordered.

Belongs to the eukaryotic ribosomal protein eL36 family. Component of the large ribosomal subunit.

It is found in the cytoplasm. This Encephalitozoon cuniculi (strain GB-M1) (Microsporidian parasite) protein is Large ribosomal subunit protein eL36 (RPL36).